The following is a 72-amino-acid chain: Large ribosomal subunit protein uL29 (72 aa).

The protein belongs to the universal ribosomal protein uL29 family. In terms of assembly, part of the 50S ribosomal subunit.

This is Large ribosomal subunit protein uL29 from Pyrococcus furiosus (strain ATCC 43587 / DSM 3638 / JCM 8422 / Vc1).